The primary structure comprises 297 residues: Ribosomal RNA small subunit methyltransferase H (297 aa).

Residues 34-36, D54, F88, D106, and Q113 each bind S-adenosyl-L-methionine; that span reads AGH. A disordered region spans residues 272–297; sequence PLTAGEEETDRNPRARSAKLRAAEKK.

Belongs to the methyltransferase superfamily. RsmH family.

The protein localises to the cytoplasm. The catalysed reaction is cytidine(1402) in 16S rRNA + S-adenosyl-L-methionine = N(4)-methylcytidine(1402) in 16S rRNA + S-adenosyl-L-homocysteine + H(+). Functionally, specifically methylates the N4 position of cytidine in position 1402 (C1402) of 16S rRNA. This chain is Ribosomal RNA small subunit methyltransferase H, found in Acidobacterium capsulatum (strain ATCC 51196 / DSM 11244 / BCRC 80197 / JCM 7670 / NBRC 15755 / NCIMB 13165 / 161).